A 342-amino-acid chain; its full sequence is Cytosolic Fe-S cluster assembly factor NBP35 (342 aa).

Positions 16–42 (SKAAPKLVAPEPEHCPGPESEQAGKGD) are disordered. [4Fe-4S] cluster-binding residues include cysteine 30, cysteine 44, cysteine 47, and cysteine 53. Position 83-90 (83-90 (GKGGVGKS)) interacts with ATP. 2 residues coordinate [4Fe-4S] cluster: cysteine 256 and cysteine 259.

The protein belongs to the Mrp/NBP35 ATP-binding proteins family. NUBP1/NBP35 subfamily. Heterotetramer of 2 NBP35 and 2 CFD1 chains. The cofactor is [4Fe-4S] cluster.

It is found in the cytoplasm. In terms of biological role, component of the cytosolic iron-sulfur (Fe/S) protein assembly (CIA) machinery. Required for maturation of extramitochondrial Fe-S proteins. The NBP35-CFD1 heterotetramer forms a Fe-S scaffold complex, mediating the de novo assembly of an Fe-S cluster and its transfer to target apoproteins. The polypeptide is Cytosolic Fe-S cluster assembly factor NBP35 (Coccidioides immitis (strain RS) (Valley fever fungus)).